Consider the following 262-residue polypeptide: Small ribosomal subunit protein eS1y (262 aa).

Residues 1–18 show a composition bias toward basic residues; that stretch reads MAVGKNKRISKGRKGGKK. Positions 1 to 21 are disordered; sequence MAVGKNKRISKGRKGGKKKAV.

It belongs to the eukaryotic ribosomal protein eS1 family. Component of the small ribosomal subunit. Mature ribosomes consist of a small (40S) and a large (60S) subunit. The 40S subunit contains about 33 different proteins and 1 molecule of RNA (18S). The 60S subunit contains about 49 different proteins and 3 molecules of RNA (25S, 5.8S and 5S).

Its subcellular location is the cytoplasm. This is Small ribosomal subunit protein eS1y from Arabidopsis thaliana (Mouse-ear cress).